A 598-amino-acid chain; its full sequence is Beta-fructofuranosidase, insoluble isoenzyme 2 (598 aa).

The N-terminal stretch at 1–25 (MGVLGSRVAWAWLVQLLLLQQLAGA) is a signal peptide. Residue aspartate 69 is part of the active site. N-linked (GlcNAc...) asparagine glycans are attached at residues asparagine 164, asparagine 189, and asparagine 348.

The protein belongs to the glycosyl hydrolase 32 family. As to expression, expressed in leaves and flowers. Weakly expressed in seeds. Expressed in growing roots, node and the rapidly elongating zone of the internode.

The protein localises to the secreted. The protein resides in the cell wall. The enzyme catalyses Hydrolysis of terminal non-reducing beta-D-fructofuranoside residues in beta-D-fructofuranosides.. In terms of biological role, cell wall-associated invertase that cleaves sucrose into glucose and fructose and is required for assimilated carbon partitioning during early grain-filling. May be involved in sucrose unloaded in the ovular and stylar vascular tissues for the stimulation of starch synthesis in the developing endosperm during grain-filling. Sugar homeostasis mediated by CIN2/GIF1 plays an important role in constitutive and induced physical and chemical defense against pathogens. This chain is Beta-fructofuranosidase, insoluble isoenzyme 2 (CIN2), found in Oryza sativa subsp. japonica (Rice).